The primary structure comprises 180 residues: UPF0227 protein YcfP (180 aa).

Belongs to the UPF0227 family.

The sequence is that of UPF0227 protein YcfP from Escherichia coli O139:H28 (strain E24377A / ETEC).